We begin with the raw amino-acid sequence, 6907 residues long: Fibrous sheath-interacting protein 2 (6907 aa).

The tract at residues 273–292 (EERIEEQQHRNREESDRKKQ) is disordered. The residue at position 430 (serine 430) is a Phosphoserine. 8 disordered regions span residues 439 to 472 (SQAF…ESGP), 954 to 990 (FQKS…RPFP), 1545 to 1573 (VQED…TKEM), 3202 to 3257 (VSSD…FDQT), 5650 to 5672 (RTSS…EHHS), 5725 to 5781 (SAQS…KPGI), 5850 to 5880 (DKGN…EAPS), and 6852 to 6874 (GSAN…KQGS). The segment covering 445–460 (PSKEEKETNADWDGRP) has biased composition (basic and acidic residues). A compositionally biased stretch (polar residues) spans 954–966 (FQKSRQPRISSPS). Composition is skewed to basic and acidic residues over residues 1545 to 1555 (VQEDNKEETKS) and 3213 to 3229 (SVED…RPDS). A compositionally biased stretch (low complexity) spans 5728–5741 (SVTTKKVSSSTNKN). The stretch at 5738 to 5766 (TNKNISAKEKEEEEREKEKVREEIKSEPS) forms a coiled coil. A compositionally biased stretch (basic and acidic residues) spans 5743-5778 (SAKEKEEEEREKEKVREEIKSEPSKPDDPQNQRESK).

May interact with AKAP4. As to expression, predominantly expressed in testis.

Its function is as follows. Plays a role in spermatogenesis. This chain is Fibrous sheath-interacting protein 2 (FSIP2), found in Homo sapiens (Human).